Reading from the N-terminus, the 493-residue chain is MDSFPLLAALFFILAATWFISFRRPRNLPPGPFPYPIVGNMLQLGTQPHETFAKLSKKYGPLMSIHLGSLYTVIVSSPEMAKEIMHKYGQVFSGRTVAQAVHACGHDKISMGFLPVGGEWRDMRKICKEQMFSHQSMEDSQWLRKQKLQQLLEYAQKCSERGRAIDIREAAFITTLNLMSATLFSMQATEFDSKVTMEFKEIIEGVASIVGVPNFADYFPILRPFDPQGVKRRADVYFGRLLAIIEGFLNERVESRRTNPNAPKKDDFLETLVDTLQTNDNKLKTDHLTHLMLDLFVGGSETSTTEIEWIMWELLANPEKMAKMKAELKSVMGEEKVVDESQMPRLPYLQAVVKESMRLHPPGPLLLPRKAESDQVVNGYLIPKGAQVLINAWAIGRDHSIWKNPDSFEPERFLDQKIDFKGTDYELIPFGSGRRVCPGMPLANRILHTVTATLVHNFDWKLERPEASDAHRGVLFGFAVRRAVPLKIVPFKV.

Residues 2–22 (DSFPLLAALFFILAATWFISF) traverse the membrane as a helical segment. Position 437 (cysteine 437) interacts with heme.

This sequence belongs to the cytochrome P450 family. Requires heme as cofactor. In terms of tissue distribution, expressed in leaf glandular trichomes.

The protein resides in the membrane. It carries out the reaction abieta-8,11,13-triene + reduced [NADPH--hemoprotein reductase] + O2 = ferruginol + oxidized [NADPH--hemoprotein reductase] + H2O + H(+). The catalysed reaction is ferruginol + reduced [NADPH--hemoprotein reductase] + O2 = 11-hydroxyferruginol + oxidized [NADPH--hemoprotein reductase] + H2O + H(+). It catalyses the reaction miltiradiene + 2 reduced [NADPH--hemoprotein reductase] + 2 O2 = 11-oxomiltiradiene + 2 oxidized [NADPH--hemoprotein reductase] + 3 H2O + 2 H(+). The protein operates within secondary metabolite biosynthesis; terpenoid biosynthesis. In terms of biological role, monooxygenase involved in the biosynthesis of labdane-related diterpenes natural products. Catalyzes the oxidation of abietatriene to produce ferruginol. Catalyzes the oxidation of ferruginol at C-12 to produce 11-hydroxyferruginol. Ferruginol and 11-hydroxyferruginol are intermediates in the biosynthesis of carnosate, a potent antioxidant. May also convert miltiradiene into 11-oxomiltiradiene. The sequence is that of Ferruginol synthase 1 from Rosmarinus officinalis (Rosemary).